We begin with the raw amino-acid sequence, 107 residues long: uncharacterized protein (107 aa).

The next 3 membrane-spanning stretches (helical) occupy residues 16–36, 47–67, and 85–105; these read VIPCTLSSPSFVLMAVISESL, IISLIESAVTSLSYVTWHSLV, and LIVLVQALHVIPCTASITSLI.

The protein localises to the membrane. This is an uncharacterized protein from Saccharomyces cerevisiae (strain ATCC 204508 / S288c) (Baker's yeast).